A 526-amino-acid chain; its full sequence is Keratin, type I cytoskeletal 10 (526 aa).

Residues 1–16 (MSVRFSSNSRQYSSAR) show a composition bias toward low complexity. Residues 1-40 (MSVRFSSNSRQYSSARSGGGGGGGGGGSSIRVSSTKSSLG) are disordered. Residues 1–144 (MSVRFSSNSR…GDGGGLLSGN (144 aa)) form a head region. Serine 17, serine 38, serine 49, serine 52, and serine 169 each carry phosphoserine. Gly residues predominate over residues 17 to 28 (SGGGGGGGGGGS). The interval 145–180 (EKVTMQNLNDRLASYMNKVRDLEESNYELEGKIKEW) is coil 1A. The IF rod domain occupies 145 to 459 (EKVTMQNLND…SLLEGEGGYV (315 aa)). Residues 181–201 (YEKHGNSSQREPRDYSKYYKT) form a linker 1 region. A coil 1B region spans residues 202-293 (IEDLKGQIVN…KNHEEEMKDL (92 aa)). The segment at 294-316 (QNVSTGDVNVEMNAAPGVDLTQL) is linker 12. The tract at residues 317–455 (LNNMRNQYEQ…QTYRSLLEGE (139 aa)) is coil 2. A tail region spans residues 456–526 (GGYVGNLQIT…IESETKKHFY (71 aa)).

The protein belongs to the intermediate filament family. Heterotetramer of two type I and two type II keratins. Heterodimer with KRT1. Two heterodimers of KRT1 and KRT10 form a heterotetramer. The KRT10 subunit in the heterotetramer is probably disulfide-linked.

The protein localises to the secreted. It is found in the extracellular space. The protein resides in the cell surface. It localises to the cytoplasm. Its function is as follows. Plays a role in the establishment of the epidermal barrier on plantar skin. Involved in the maintenance of cell layer development and keratin filament bundles in suprabasal cells of the epithelium. The chain is Keratin, type I cytoskeletal 10 from Rattus norvegicus (Rat).